The primary structure comprises 525 residues: MTENIHKHRILILDFGSQYTQLVARRVRELGVYCELWAWDVTEAQIREFNPSGIILSGGPESTTEENSPRAPEYVFEAGVPVFGVCYGMQTMAMQLGGHVEASNEREFGYAQVEVRTNSALIRGIEDSLTADGKPLLDVWMSHGDKVTAIPSDFVTVASTETCPFAIMANEEKRFYGVQFHPEVTHTRQGMRMLERFVRDICQCEALWTPAKIIDDAVNRIREQVGDDKVILGLSGGVDSSVTAMLLHRAIGKNLTCVFVDNGLLRLNEAEQVMDMFGDHFGLNIVHVPAEERFLTALKGENDPEAKRKIIGRVFVEVFDEEAFRLEDVKWLAQGTIYPDVIESAASATGKAHVIKSHHNVGGLPKEMKMGLVEPLKELFKDEVRKIGLELGLPYDMLYRHPFPGPGLGVRVLGEVKKEYCDLLRRADAIFIEELHKADLYNKVSQAFTVFLPVRSVGVMGDGRKYDWVVSLRAVETIDFMTAHWAHLPYDFLGRVSNRIINEVNGISRVVYDISGKPPATIEWE.

Residues 9 to 207 form the Glutamine amidotransferase type-1 domain; that stretch reads RILILDFGSQ…VRDICQCEAL (199 aa). The Nucleophile role is filled by Cys-86. Residues His-181 and Glu-183 contribute to the active site. A GMPS ATP-PPase domain is found at 208-400; sequence WTPAKIIDDA…LGLPYDMLYR (193 aa). 235-241 provides a ligand contact to ATP; the sequence is SGGVDSS.

Homodimer.

The enzyme catalyses XMP + L-glutamine + ATP + H2O = GMP + L-glutamate + AMP + diphosphate + 2 H(+). It participates in purine metabolism; GMP biosynthesis; GMP from XMP (L-Gln route): step 1/1. Catalyzes the synthesis of GMP from XMP. The sequence is that of GMP synthase [glutamine-hydrolyzing] from Citrobacter koseri (strain ATCC BAA-895 / CDC 4225-83 / SGSC4696).